The primary structure comprises 1119 residues: DNA-directed RNA polymerase subunit beta (1119 aa).

The protein belongs to the RNA polymerase beta chain family. The RNAP catalytic core consists of 2 alpha, 1 beta, 1 beta' and 1 omega subunit. When a sigma factor is associated with the core the holoenzyme is formed, which can initiate transcription.

The enzyme catalyses RNA(n) + a ribonucleoside 5'-triphosphate = RNA(n+1) + diphosphate. DNA-dependent RNA polymerase catalyzes the transcription of DNA into RNA using the four ribonucleoside triphosphates as substrates. The polypeptide is DNA-directed RNA polymerase subunit beta (Thermus thermophilus (strain ATCC BAA-163 / DSM 7039 / HB27)).